The following is a 275-amino-acid chain: MPIVKRKPTSAGRRFVVNVVNADLHKGAPHAPLLEKKSKSGGRNNNGRITTRHIGGGHKQHYRVIDFRRNKDGIPAKVERLEYDPNRTAYIALVCYADGERRYIIAPKGVKAGDVIQSGDAAPIKPGNALPLRNIPVGSVVHCIEMKPGKGAQIARSAGTSVQLVAREGQYCTLRLRSGEMRKILSECRATLGEVSNSEHNLRSLGKAGASRWRGVRPTVRGVAMNPVDHPHGGGEGRTSGGRHPVSPWGTPTKGYKTRSNKRTDKMIVRRRNKK.

2 disordered regions span residues 28–54 (APHA…TRHI) and 223–275 (VAMN…RNKK).

The protein belongs to the universal ribosomal protein uL2 family. As to quaternary structure, part of the 50S ribosomal subunit. Forms a bridge to the 30S subunit in the 70S ribosome.

One of the primary rRNA binding proteins. Required for association of the 30S and 50S subunits to form the 70S ribosome, for tRNA binding and peptide bond formation. It has been suggested to have peptidyltransferase activity; this is somewhat controversial. Makes several contacts with the 16S rRNA in the 70S ribosome. This is Large ribosomal subunit protein uL2 from Saccharophagus degradans (strain 2-40 / ATCC 43961 / DSM 17024).